The primary structure comprises 426 residues: MLDYRFIRENVDAVKENVKVRNVHADVDAIVHLYDQRVKLLAELQELQRARNENAQTMKSSLDALARSACVETGRALKDRIAHSERLLVQISDQLLSATQALPNMTHMCTPHGRSDSDNLEIKRCGVPPCFSFSPRDHVELARLLDIVDFEAGKKVSGIKFYYLKREGVLLEQALIMFGLQFLQERGFVPFLTPDIAREGMVCGLGFNPRGSGSNIYRIEGEHRCLVATAEITLGAYHAGEVLEERSLPRLYAGLSHCFRKEAGAAGQFSRGLYRVHQFTKLEMFAYCTPSDSECLHERLRSLEEEIFTALEIPFRVVEVCAGDLGAPAYRKWDLEAWMPGRQGGSWGEVTSASNCTDYQARRLNVRYKDAEGKKHYVHMLNGTALAISRVLIALLENGQDAEGRVRIPQALVPFCGFEYLYPRVL.

L-serine is bound at residue 229 to 231 (TAE). ATP contacts are provided by residues 260 to 262 (RKE) and valine 276. Position 283 (glutamate 283) interacts with L-serine. ATP is bound at residue 349-352 (EVTS). Threonine 384 contacts L-serine.

This sequence belongs to the class-II aminoacyl-tRNA synthetase family. Type-1 seryl-tRNA synthetase subfamily. As to quaternary structure, homodimer. The tRNA molecule binds across the dimer.

It localises to the cytoplasm. It catalyses the reaction tRNA(Ser) + L-serine + ATP = L-seryl-tRNA(Ser) + AMP + diphosphate + H(+). The enzyme catalyses tRNA(Sec) + L-serine + ATP = L-seryl-tRNA(Sec) + AMP + diphosphate + H(+). It participates in aminoacyl-tRNA biosynthesis; selenocysteinyl-tRNA(Sec) biosynthesis; L-seryl-tRNA(Sec) from L-serine and tRNA(Sec): step 1/1. Catalyzes the attachment of serine to tRNA(Ser). Is also able to aminoacylate tRNA(Sec) with serine, to form the misacylated tRNA L-seryl-tRNA(Sec), which will be further converted into selenocysteinyl-tRNA(Sec). The protein is Serine--tRNA ligase of Treponema pallidum (strain Nichols).